The following is a 316-amino-acid chain: NADH-cytochrome b5 reductase-like (316 aa).

The Oxidoreductase-like domain occupies 17–53 (KPVEPLPSQCCGSGCSPCVFDLYYRDLERWETARARN). The FAD-binding FR-type domain maps to 76–178 (ETFLAFHIST…RGPFGSFLYE (103 aa)). FAD is bound by residues 158–173 (ESWRTGDTAFWRGPFG) and 183–215 (GELLMLAAGTGLAPMVPILQSITDDEDDETFVT).

It belongs to the flavoprotein pyridine nucleotide cytochrome reductase family. FAD is required as a cofactor.

It carries out the reaction 2 Fe(III)-[cytochrome b5] + NADH = 2 Fe(II)-[cytochrome b5] + NAD(+) + H(+). NADH-cytochrome b5 reductases are involved in desaturation and elongation of fatty acids, cholesterol biosynthesis, drug metabolism, and, in erythrocyte, methemoglobin reduction. The sequence is that of NADH-cytochrome b5 reductase-like (Cyb5rl) from Mus musculus (Mouse).